Here is a 78-residue protein sequence, read N- to C-terminus: DNA import protein CedA1 (78 aa).

Helical transmembrane passes span 12–32 (STVT…GWAL) and 53–73 (AIIA…ISYI).

As to quaternary structure, forms a complex composed of CedA, CedA1 and CedA2.

Its subcellular location is the cell membrane. In terms of biological role, part of the Ced system, which is involved in DNA import. The sequence is that of DNA import protein CedA1 from Sulfolobus acidocaldarius (strain ATCC 33909 / DSM 639 / JCM 8929 / NBRC 15157 / NCIMB 11770).